The following is a 597-amino-acid chain: Formate--tetrahydrofolate ligase (597 aa).

Residue 84–91 (TPLGEGKS) coordinates ATP.

Belongs to the formate--tetrahydrofolate ligase family.

It catalyses the reaction (6S)-5,6,7,8-tetrahydrofolate + formate + ATP = (6R)-10-formyltetrahydrofolate + ADP + phosphate. Its pathway is one-carbon metabolism; tetrahydrofolate interconversion. The chain is Formate--tetrahydrofolate ligase from Dehalococcoides mccartyi (strain ATCC BAA-2266 / KCTC 15142 / 195) (Dehalococcoides ethenogenes (strain 195)).